We begin with the raw amino-acid sequence, 368 residues long: MPDIVNRKVEHVEIAAFENVDGLSSSTFLNDVILVHQGFPGISFSEINTKTKFFRKEISVPVMVTGMTGGRNELGRINKIIAEVAEKFGIPMGVGSQRVAIEKAEARESFAIVRKVAPTIPIIANLGMPQLVKGYGLKEFQDAIQMIEADAIAVHLNPAQEVFQPEGEPEYQIYALEKLRDISKELSVPIIVKESGNGISMETAKLLYSYGIKNFDTSGQGGTNWIAIEMIRDIRRGNWKAESAKNFLDWGVPTAASIMEVRYSVPDSFLVGSGGIRSGLDAAKAIALGADIAGMALPVLKSAIEGKESLEQFFRKIIFELKAAMMLTGSKDVDALKKTSIVILGKLKEWAEYRGINLSIYEKVRKRE.

Residue R7–K8 participates in substrate binding. FMN contacts are provided by residues T65, G66–T68, S96, and N125. S96–R98 is a binding site for substrate. Residue Q160 participates in substrate binding. E161 contributes to the Mg(2+) binding site. FMN contacts are provided by residues K193, S218, T223, G275–R277, and A296–L297.

This sequence belongs to the IPP isomerase type 2 family. In terms of assembly, homooctamer. Dimer of tetramers. The cofactor is FMN. It depends on NADPH as a cofactor. Mg(2+) is required as a cofactor.

The protein localises to the cytoplasm. It carries out the reaction isopentenyl diphosphate = dimethylallyl diphosphate. Involved in the biosynthesis of isoprenoids. Catalyzes the 1,3-allylic rearrangement of the homoallylic substrate isopentenyl (IPP) to its allylic isomer, dimethylallyl diphosphate (DMAPP). This is Isopentenyl-diphosphate delta-isomerase from Saccharolobus shibatae (strain ATCC 51178 / DSM 5389 / JCM 8931 / NBRC 15437 / B12) (Sulfolobus shibatae).